The following is a 1537-amino-acid chain: DNA excision repair protein ERCC-6-like 2 (1537 aa).

The Helicase ATP-binding domain maps to 134–319; that stretch reads YRHYIEGRGC…WCVMDWAVPG (186 aa). 147 to 154 contributes to the ATP binding site; it reads DDMGLGKT. The short motif at 270–273 is the DEAH box element; it reads DEAH. Residues 510-660 form the Helicase C-terminal domain; that stretch reads VLQQLLNHFR…CVVVGSENAK (151 aa). Disordered stretches follow at residues 715-735 and 749-768; these read KGEP…QEPT and SVGH…TSRT. Residues 755 to 764 are compositionally biased toward basic and acidic residues; that stretch reads GKTDKHKFSD. Positions 772–783 match the Atypical PIP-box motif; sequence PAQLTLLQCGFS. 3 disordered regions span residues 791-811, 833-891, and 918-948; these read KSDQ…DEQP, SEHQ…EDSD, and EDSE…PNLL. Residues 834–857 show a composition bias toward basic and acidic residues; sequence EHQKSDNIQTPDEKCVSDKSEKTL. Residues Ser968 and Ser971 each carry the phosphoserine modification. The interval 1274-1306 is disordered; that stretch reads VHKKEERVRNKSKEKESLLKENPSNDSTLSCYD. The segment covering 1276–1292 has biased composition (basic and acidic residues); that stretch reads KKEERVRNKSKEKESLL. Polar residues predominate over residues 1295-1306; it reads NPSNDSTLSCYD.

Belongs to the SNF2/RAD54 helicase family. As to quaternary structure, interacts with NEK6. Interacts (via an atypical PIP-box) with PCNA; this interaction facilitates cenrtomeric localization of ERCC6L2. Interacts with CYREN; this interaction is DNA independent. Interacts with XRCC6 and XRCC5. Post-translationally, phosphorylated by NEK6.

The protein resides in the nucleus. The protein localises to the cytoplasm. It localises to the cytoskeleton. Its subcellular location is the microtubule organizing center. It is found in the centrosome. The protein resides in the mitochondrion. The protein localises to the chromosome. It localises to the centromere. In terms of biological role, promotes double-strand break (DSB) end-joining and facilitates programmed recombination by controlling how DNA ends are joined in a spatially oriented manner during repair. Also plays a role in DNA repair by restricting DNA end resection in double strand break (DSB) repair. Facilitates replication of complex DNA regions and regulates the maintenance of chromatin structure. The chain is DNA excision repair protein ERCC-6-like 2 from Mus musculus (Mouse).